A 337-amino-acid chain; its full sequence is Probable E3 ubiquitin-protein ligase LUL1 (337 aa).

G2 carries N-myristoyl glycine lipidation. The interval 139–255 (FTFDASMPGR…GEIKIEVVKQ (117 aa)) is DAR2 domain. The RING-type; atypical zinc-finger motif lies at 285–324 (CVVCLSEPRDTTVLPCRHMCMCSGCAKALRFQTNLCPVCR).

Belongs to the RING-type zinc finger family. LOG2 subfamily. Myristoylated (in vitro).

It catalyses the reaction S-ubiquitinyl-[E2 ubiquitin-conjugating enzyme]-L-cysteine + [acceptor protein]-L-lysine = [E2 ubiquitin-conjugating enzyme]-L-cysteine + N(6)-ubiquitinyl-[acceptor protein]-L-lysine.. Its pathway is protein modification; protein ubiquitination. In terms of biological role, acts as an E3 ubiquitin-protein ligase, or as part of E3 complex, which accepts ubiquitin from specific E2 ubiquitin-conjugating enzymes and then transfers it to substrates (in vitro). The protein is Probable E3 ubiquitin-protein ligase LUL1 (LUL1) of Arabidopsis thaliana (Mouse-ear cress).